Reading from the N-terminus, the 573-residue chain is Putative ferric-chelate reductase 1 (573 aa).

Residues 4–24 (VCKSPQRLLFVLVSCFGLVQS) form a helical membrane-spanning segment. The Reelin domain maps to 15–181 (LVSCFGLVQS…GTTGTSTTPA (167 aa)). Residues 213 to 328 (GCYFVAVQAS…NEYYLMIAAG (116 aa)) form the DOMON domain. N-linked (GlcNAc...) asparagine glycans are attached at residues Asn286 and Asn300. The Cytochrome b561 domain occupies 332–532 (QGNIQFHTNK…YILQDLNLRA (201 aa)). A helical membrane pass occupies residues 369–389 (AHGCLMLISWMATGSIGMIIA). Heme b-binding residues include His370 and His411. A run of 2 helical transmembrane segments spans residues 414–434 (LMTL…VSAG) and 441–461 (HPVL…VAAF). Residues His441 and His477 each coordinate heme b. Helical transmembrane passes span 479–499 (CNAF…LALF), 506–526 (GWML…YILQ), and 550–570 (ILLF…LVGI).

It belongs to the FRRS1 family. Heme b serves as cofactor.

The protein localises to the membrane. Its function is as follows. Putative ferric-chelate reductases reduce Fe(3+) to Fe(2+) before its transport from the endosome to the cytoplasm. In Danio rerio (Zebrafish), this protein is Putative ferric-chelate reductase 1 (frrs1).